Consider the following 323-residue polypeptide: Peroxidase 16 (323 aa).

The signal sequence occupies residues 1–23 (MKNQSSFSIVALLLIFFSSSVFA). Disulfide bonds link C34/C113, C67/C72, C119/C319, and C198/C230. The active-site Proton acceptor is the H65. Positions 66, 69, 71, 73, and 75 each coordinate Ca(2+). Residue P161 coordinates substrate. H191 is a binding site for heme b. Residue T192 coordinates Ca(2+). Residues D243, S246, and D251 each coordinate Ca(2+).

The protein belongs to the peroxidase family. Classical plant (class III) peroxidase subfamily. Heme b is required as a cofactor. The cofactor is Ca(2+). Expressed in the whole plant, but preferentially in roots and leaves.

Its subcellular location is the secreted. It carries out the reaction 2 a phenolic donor + H2O2 = 2 a phenolic radical donor + 2 H2O. Removal of H(2)O(2), oxidation of toxic reductants, biosynthesis and degradation of lignin, suberization, auxin catabolism, response to environmental stresses such as wounding, pathogen attack and oxidative stress. These functions might be dependent on each isozyme/isoform in each plant tissue. This chain is Peroxidase 16 (PER16), found in Arabidopsis thaliana (Mouse-ear cress).